The chain runs to 269 residues: Eukaryotic translation initiation factor 3 subunit G (269 aa).

The disordered stretch occupies residues 140–181; it reads AIGGGDMSAQGGSGSGRYVPPSLRAGARDPSSNAYQDQRERD. Positions 141-154 are enriched in gly residues; that stretch reads IGGGDMSAQGGSGS. At Ser-161 the chain carries Phosphoserine. An RRM domain is found at 184-263; the sequence is KTIRLTQVNE…FMLHAEWSKP (80 aa).

This sequence belongs to the eIF-3 subunit G family. In terms of assembly, component of the eukaryotic translation initiation factor 3 (eIF-3) complex.

Its subcellular location is the cytoplasm. RNA-binding component of the eukaryotic translation initiation factor 3 (eIF-3) complex, which is involved in protein synthesis of a specialized repertoire of mRNAs and, together with other initiation factors, stimulates binding of mRNA and methionyl-tRNAi to the 40S ribosome. The eIF-3 complex specifically targets and initiates translation of a subset of mRNAs involved in cell proliferation. This subunit can bind 18S rRNA. This is Eukaryotic translation initiation factor 3 subunit G from Kluyveromyces lactis (strain ATCC 8585 / CBS 2359 / DSM 70799 / NBRC 1267 / NRRL Y-1140 / WM37) (Yeast).